A 558-amino-acid chain; its full sequence is Type I restriction enzyme MjaIX methylase subunit (558 aa).

Positions 1 to 37 are disordered; that stretch reads MATLDKFLSIKENDEKTKKKESKKKSSKSNKTSESLV. Residues 8-18 show a composition bias toward basic and acidic residues; that stretch reads LSIKENDEKTK. A compositionally biased stretch (basic residues) spans 19–28; the sequence is KKESKKKSSK. S-adenosyl-L-methionine contacts are provided by residues 227-232, 256-258, and D283; these read KFYTPR and SGG.

Belongs to the N(4)/N(6)-methyltransferase family. As to quaternary structure, the type I restriction/modification system is composed of three polypeptides R, M and S.

It carries out the reaction a 2'-deoxyadenosine in DNA + S-adenosyl-L-methionine = an N(6)-methyl-2'-deoxyadenosine in DNA + S-adenosyl-L-homocysteine + H(+). In terms of biological role, the subtype gamma methyltransferase (M) subunit of a type I restriction enzyme. The M and S subunits together form a methyltransferase (MTase) that methylates A-3 on the top and A-2 on the bottom strand of the sequence 5'-CCAN(5)GTR-3'. In the presence of the R subunit the complex can also act as an endonuclease, binding to the same target sequence but cutting the DNA some distance from this site. Whether the DNA is cut or modified depends on the methylation state of the target sequence. When the target site is unmodified, the DNA is cut. When the target site is hemimethylated, the complex acts as a maintenance MTase modifying the DNA so that both strands become methylated. After locating a non-methylated recognition site, the enzyme complex serves as a molecular motor that translocates DNA in an ATP-dependent manner until a collision occurs that triggers cleavage. The chain is Type I restriction enzyme MjaIX methylase subunit from Methanocaldococcus jannaschii (strain ATCC 43067 / DSM 2661 / JAL-1 / JCM 10045 / NBRC 100440) (Methanococcus jannaschii).